A 480-amino-acid polypeptide reads, in one-letter code: Acetylxylan esterase (480 aa).

The N-terminal stretch at 1-19 is a signal peptide; the sequence is MNRKLFMTGLLMLAMTMQA.

Belongs to the AB hydrolase superfamily.

The enzyme catalyses Deacetylation of xylans and xylo-oligosaccharides.. It participates in glycan degradation; xylan degradation. Involved in degradation of plant cell wall polysaccharides. Is an acetyl esterase with broad substrate specificity, releasing acetic acid from acetylated xylo-oligosaccharides and acetylated xylan as well as xylose-tetraacetate, 4-O-methylumbelliferyl acetate, glucose-pentaacetate, and cephalosporin C. Appears to have greater activity on oligosaccharides than on polymeric substrates. Is also able to release acetic acid from xylo-oligosaccharides with 4-O-methylglucuronic acid side groups proximally located to O-acetyl esters. Preferentially targets xylo-oligosaccharides possessing three or more O-acetyl groups, but following their depletion it is active on the less acetylated portion of the substrate. The sequence is that of Acetylxylan esterase from Xylanibacter ruminicola (strain ATCC 19189 / DSM 19721 / CIP 105475 / JCM 8958 / 23) (Prevotella ruminicola).